The following is a 157-amino-acid chain: uncharacterized protein (157 aa).

A helical membrane pass occupies residues 6-26 (LVGGVLRVLVVVGAVFDVAVL). The Ricin B-type lectin domain maps to 33–157 (ADGPVQLKSR…APDQQWDSVP (125 aa)).

It is found in the membrane. This is an uncharacterized protein from Mycobacterium tuberculosis (strain CDC 1551 / Oshkosh).